A 130-amino-acid polypeptide reads, in one-letter code: Small ribosomal subunit protein uS11 (130 aa).

Belongs to the universal ribosomal protein uS11 family. Part of the 30S ribosomal subunit. Interacts with proteins S7 and S18. Binds to IF-3.

Functionally, located on the platform of the 30S subunit, it bridges several disparate RNA helices of the 16S rRNA. Forms part of the Shine-Dalgarno cleft in the 70S ribosome. The chain is Small ribosomal subunit protein uS11 from Dehalococcoides mccartyi (strain ATCC BAA-2100 / JCM 16839 / KCTC 5957 / BAV1).